We begin with the raw amino-acid sequence, 291 residues long: Nucleotide-binding protein lmo2474 (291 aa).

Residue 13–20 participates in ATP binding; that stretch reads GMSGAGKT. GTP is bound at residue 63–66; sequence DLRG.

This sequence belongs to the RapZ-like family.

Functionally, displays ATPase and GTPase activities. This Listeria monocytogenes serovar 1/2a (strain ATCC BAA-679 / EGD-e) protein is Nucleotide-binding protein lmo2474.